Reading from the N-terminus, the 963-residue chain is Exportin-T (963 aa).

M1 is subject to N-acetylmethionine. K635 is modified (N6-acetyllysine).

This sequence belongs to the exportin family. As to quaternary structure, found in a complex with XPOT, Ran and tRNA. Probably found in a complex with nucleoporins. Interacts with Ran and tRNA in a GTP-dependent manner.

It localises to the nucleus. It is found in the cytoplasm. Its function is as follows. Mediates the nuclear export of aminoacylated tRNAs. In the nucleus binds to tRNA and to the GTPase Ran in its active GTP-bound form. Docking of this trimeric complex to the nuclear pore complex (NPC) is mediated through binding to nucleoporins. Upon transit of a nuclear export complex into the cytoplasm, disassembling of the complex and hydrolysis of Ran-GTP to Ran-GDP (induced by RANBP1 and RANGAP1, respectively) cause release of the tRNA from the export receptor. XPOT then return to the nuclear compartment and mediate another round of transport. The directionality of nuclear export is thought to be conferred by an asymmetric distribution of the GTP- and GDP-bound forms of Ran between the cytoplasm and nucleus. The polypeptide is Exportin-T (Xpot) (Mus musculus (Mouse)).